We begin with the raw amino-acid sequence, 212 residues long: Ion-translocating oxidoreductase complex subunit G (212 aa).

Residues 9–29 (GLLLGLFALLCTGLVAIVNQL) traverse the membrane as a helical segment. Threonine 176 carries the post-translational modification FMN phosphoryl threonine.

The protein belongs to the RnfG family. In terms of assembly, the complex is composed of six subunits: RnfA, RnfB, RnfC, RnfD, RnfE and RnfG. Requires FMN as cofactor.

Its subcellular location is the cell inner membrane. Its function is as follows. Part of a membrane-bound complex that couples electron transfer with translocation of ions across the membrane. The chain is Ion-translocating oxidoreductase complex subunit G from Shewanella piezotolerans (strain WP3 / JCM 13877).